The following is a 267-amino-acid chain: Regulatory protein RecX (267 aa).

Belongs to the RecX family.

It localises to the cytoplasm. Functionally, modulates RecA activity. The protein is Regulatory protein RecX of Staphylococcus epidermidis (strain ATCC 12228 / FDA PCI 1200).